We begin with the raw amino-acid sequence, 97 residues long: Large ribosomal subunit protein uL23 (97 aa).

Belongs to the universal ribosomal protein uL23 family. Part of the 50S ribosomal subunit. Contacts protein L29, and trigger factor when it is bound to the ribosome.

Functionally, one of the early assembly proteins it binds 23S rRNA. One of the proteins that surrounds the polypeptide exit tunnel on the outside of the ribosome. Forms the main docking site for trigger factor binding to the ribosome. This Lactococcus lactis subsp. cremoris (strain SK11) protein is Large ribosomal subunit protein uL23.